A 463-amino-acid chain; its full sequence is L-seryl-tRNA(Sec) selenium transferase (463 aa).

K295 bears the N6-(pyridoxal phosphate)lysine mark.

The protein belongs to the SelA family. In terms of assembly, homodecamer; pentamer of dimers. Binds only one seryl-tRNA(Sec) per dimer. The cofactor is pyridoxal 5'-phosphate.

It localises to the cytoplasm. The catalysed reaction is L-seryl-tRNA(Sec) + selenophosphate + H(+) = L-selenocysteinyl-tRNA(Sec) + phosphate. It functions in the pathway aminoacyl-tRNA biosynthesis; selenocysteinyl-tRNA(Sec) biosynthesis; selenocysteinyl-tRNA(Sec) from L-seryl-tRNA(Sec) (bacterial route): step 1/1. Converts seryl-tRNA(Sec) to selenocysteinyl-tRNA(Sec) required for selenoprotein biosynthesis. The polypeptide is L-seryl-tRNA(Sec) selenium transferase (Salmonella paratyphi A (strain AKU_12601)).